We begin with the raw amino-acid sequence, 192 residues long: Putative B3 domain-containing protein At4g03160 (192 aa).

Residues 22 to 44 are disordered; the sequence is VFFDQEEEEEDEEEEYDEESVCE. A compositionally biased stretch (acidic residues) spans 25–44; that stretch reads DQEEEEEDEEEEYDEESVCE. A DNA-binding region (TF-B3) is located at residues 75 to 173; it reads KDNQYRLMLG…EICFAIDSTR (99 aa).

It localises to the nucleus. The sequence is that of Putative B3 domain-containing protein At4g03160 from Arabidopsis thaliana (Mouse-ear cress).